The following is a 399-amino-acid chain: Chorismate synthase (399 aa).

Residues arginine 40 and arginine 46 each contribute to the NADP(+) site. Residues 135-137 (RAS), 256-257 (QA), glycine 301, 316-320 (KPIAT), and arginine 342 contribute to the FMN site.

Belongs to the chorismate synthase family. As to quaternary structure, homotetramer. FMNH2 is required as a cofactor.

The enzyme catalyses 5-O-(1-carboxyvinyl)-3-phosphoshikimate = chorismate + phosphate. The protein operates within metabolic intermediate biosynthesis; chorismate biosynthesis; chorismate from D-erythrose 4-phosphate and phosphoenolpyruvate: step 7/7. Its function is as follows. Catalyzes the anti-1,4-elimination of the C-3 phosphate and the C-6 proR hydrogen from 5-enolpyruvylshikimate-3-phosphate (EPSP) to yield chorismate, which is the branch point compound that serves as the starting substrate for the three terminal pathways of aromatic amino acid biosynthesis. This reaction introduces a second double bond into the aromatic ring system. The protein is Chorismate synthase of Pseudarthrobacter chlorophenolicus (strain ATCC 700700 / DSM 12829 / CIP 107037 / JCM 12360 / KCTC 9906 / NCIMB 13794 / A6) (Arthrobacter chlorophenolicus).